A 330-amino-acid polypeptide reads, in one-letter code: Inactive hydroxysteroid dehydrogenase-like protein 1 (330 aa).

Ala2 is subject to N-acetylalanine. The segment at 2-82 is required for mitochondria translocation; sequence AAVDSFYLLY…SGATDGIGKA (81 aa). Residues 74-80, Asp125, and Lys222 contribute to the NADP(+) site; that span reads GATDGIG.

The protein belongs to the short-chain dehydrogenases/reductases (SDR) family. 17-beta-HSD 3 subfamily. Interacts with STYXL1. Highly expressed in testis and ovary. Also detected in thyroid, spinal cord, adrenal gland, heart, placenta, skeletal muscle, small intestine, colon, spleen, prostate and pancreas.

It localises to the mitochondrion. In Homo sapiens (Human), this protein is Inactive hydroxysteroid dehydrogenase-like protein 1 (HSDL1).